The primary structure comprises 218 residues: ATP phosphoribosyltransferase (218 aa).

The protein belongs to the ATP phosphoribosyltransferase family. Short subfamily. As to quaternary structure, heteromultimer composed of HisG and HisZ subunits.

Its subcellular location is the cytoplasm. The catalysed reaction is 1-(5-phospho-beta-D-ribosyl)-ATP + diphosphate = 5-phospho-alpha-D-ribose 1-diphosphate + ATP. Its pathway is amino-acid biosynthesis; L-histidine biosynthesis; L-histidine from 5-phospho-alpha-D-ribose 1-diphosphate: step 1/9. Catalyzes the condensation of ATP and 5-phosphoribose 1-diphosphate to form N'-(5'-phosphoribosyl)-ATP (PR-ATP). Has a crucial role in the pathway because the rate of histidine biosynthesis seems to be controlled primarily by regulation of HisG enzymatic activity. This is ATP phosphoribosyltransferase from Burkholderia thailandensis (strain ATCC 700388 / DSM 13276 / CCUG 48851 / CIP 106301 / E264).